Here is a 355-residue protein sequence, read N- to C-terminus: Protein RecA (355 aa).

An ATP-binding site is contributed by 65–72 (GPESSGKT).

Belongs to the RecA family.

The protein resides in the cytoplasm. Can catalyze the hydrolysis of ATP in the presence of single-stranded DNA, the ATP-dependent uptake of single-stranded DNA by duplex DNA, and the ATP-dependent hybridization of homologous single-stranded DNAs. It interacts with LexA causing its activation and leading to its autocatalytic cleavage. The sequence is that of Protein RecA from Pseudomonas putida (strain W619).